Here is a 421-residue protein sequence, read N- to C-terminus: 4-hydroxy-3-methylbut-2-en-1-yl diphosphate synthase (flavodoxin) (421 aa).

[4Fe-4S] cluster-binding residues include cysteine 298, cysteine 301, cysteine 344, and glutamate 351.

This sequence belongs to the IspG family. It depends on [4Fe-4S] cluster as a cofactor.

It catalyses the reaction (2E)-4-hydroxy-3-methylbut-2-enyl diphosphate + oxidized [flavodoxin] + H2O + 2 H(+) = 2-C-methyl-D-erythritol 2,4-cyclic diphosphate + reduced [flavodoxin]. It functions in the pathway isoprenoid biosynthesis; isopentenyl diphosphate biosynthesis via DXP pathway; isopentenyl diphosphate from 1-deoxy-D-xylulose 5-phosphate: step 5/6. Functionally, converts 2C-methyl-D-erythritol 2,4-cyclodiphosphate (ME-2,4cPP) into 1-hydroxy-2-methyl-2-(E)-butenyl 4-diphosphate. In Neisseria meningitidis serogroup C / serotype 2a (strain ATCC 700532 / DSM 15464 / FAM18), this protein is 4-hydroxy-3-methylbut-2-en-1-yl diphosphate synthase (flavodoxin).